A 328-amino-acid chain; its full sequence is Pleckstrin homology domain protein OPY1 (328 aa).

The segment at 19–52 (NLIKKPSTSQNKTPTAQSSSGNNGAADGAPQGYH) is disordered. Over residues 24 to 41 (PSTSQNKTPTAQSSSGNN) the composition is skewed to polar residues. The interval 213–328 (AEHQVCSGIL…IRKKLKAENI (116 aa)) is required for targeting to the cell membrane. A PH domain is found at 215-318 (HQVCSGILYT…WIINFKSGIL (104 aa)).

In terms of assembly, interacts with MSS4 (via N-terminus); to negatively regulate MSS4 kinase activity.

It is found in the cell membrane. The protein resides in the cytoplasm. In terms of biological role, binds phosphatidylinositol 4,5-bisphosphate (PtdIns(4,5)P2/PIP2) at the cell membrane. Negatively regulates the activity of phosphatidylinositol 4-phosphate 5-kinase MSS4. This is Pleckstrin homology domain protein OPY1 (OPY1) from Saccharomyces cerevisiae (strain ATCC 204508 / S288c) (Baker's yeast).